Here is a 910-residue protein sequence, read N- to C-terminus: von Willebrand factor A domain-containing protein DDB_G0292740 (910 aa).

One can recognise a VIT domain in the interval 63-194 (AYQYYNVSSF…SITIHITMIS (132 aa)). Residues 297–318 (IKNNPHSDSDSDSDDEENKKEN) form a disordered region. A VWFA domain is found at 346-515 (EFIFLIDCSG…DMETEVMKLL (170 aa)). Low complexity predominate over residues 703-719 (QYQQQQQQQQQNFNSGF). The interval 703-815 (QYQQQQQQQQ…TQSESTPSND (113 aa)) is disordered. The span at 720–749 (APPPPPMMSSGPPPPPGSSFGAPPPPPPGG) shows a compositional bias: pro residues. Over residues 750–802 (AFPTSSISEKKSSSQSSSSYLPPTMSLSRKSSLSPSSPSKNYPSPKLSSPSLS) the composition is skewed to low complexity. A compositionally biased stretch (polar residues) spans 803 to 815 (YGSTQSESTPSND).

This Dictyostelium discoideum (Social amoeba) protein is von Willebrand factor A domain-containing protein DDB_G0292740.